The sequence spans 108 residues: MSFADTLRQLSSAEDFFSALHVDYDPQILNVARLHILRKMRLYLEADKGDLADESLQKQQYQHYLAQAYNDFVHSSPIKERLFKVHQEAVKPVKLPMVKLTSLTMPPE.

Belongs to the NifW family. As to quaternary structure, homotrimer; associates with NifD.

May protect the nitrogenase Fe-Mo protein from oxidative damage. The protein is Nitrogenase-stabilizing/protective protein NifW of Zymomonas mobilis subsp. mobilis (strain ATCC 31821 / ZM4 / CP4).